A 367-amino-acid chain; its full sequence is Carbamoyl-phosphate synthase (367 aa).

The ATP-grasp domain maps to 111 to 296 (KEFYNEIGVP…SLCELVNMAA (186 aa)). 137–186 (KMEFPVVLKQGQGQGGKDIKVAESLDDVKEYFEEFDHALCEKFIEGSEIS) is an ATP binding site. Mg(2+) contacts are provided by D253, E267, and N269. Mn(2+) contacts are provided by D253, E267, and N269.

It belongs to the small carbamoyl-phosphate synthase family. As to quaternary structure, forms homodimers and homotetramers (dimers of dimers). Mg(2+) serves as cofactor. The cofactor is Mn(2+).

The catalysed reaction is hydrogencarbonate + NH4(+) + 2 ATP = carbamoyl phosphate + 2 ADP + phosphate + 2 H(+). Functionally, catalyzes the synthesis of carbamoyl phosphate from ATP, ammonium and bicarbonate. Proceeds via a three-step mechanism, i.e. the phosphorylation of hydrogencarbonate to carboxyphosphate, a nucleophilic attack of ammonia on carboxyphosphate yielding carbamate, and the phosphorylation of carbamate forming carbamoyl phosphate. In M.smithii, the predominant archaeon in the human gut, one function of this enzyme may be to sequester ammonia, a scarce nutrient in the intestine which is the major source of nitrogen in M.smithii for the biosynthesis of nucleotides, amino acids, and many other metabolites. This chain is Carbamoyl-phosphate synthase, found in Methanobrevibacter smithii (strain ATCC 35061 / DSM 861 / OCM 144 / PS).